Consider the following 210-residue polypeptide: Outer-membrane lipoprotein LolB (210 aa).

The first 29 residues, 1–29 (MSLISNNEERSLRVRYCIAIALSALLISG), serve as a signal peptide directing secretion. A lipid anchor (N-palmitoyl cysteine) is attached at C30. C30 is lipidated: S-diacylglycerol cysteine.

This sequence belongs to the LolB family. As to quaternary structure, monomer.

It localises to the cell outer membrane. In terms of biological role, plays a critical role in the incorporation of lipoproteins in the outer membrane after they are released by the LolA protein. This is Outer-membrane lipoprotein LolB from Coxiella burnetii (strain CbuK_Q154) (Coxiella burnetii (strain Q154)).